The primary structure comprises 449 residues: Xylose isomerase (449 aa).

Catalysis depends on residues His101 and Asp104. Mg(2+) contacts are provided by Glu232, Glu268, His271, Asp296, Asp307, Asp309, and Asp340.

The protein belongs to the xylose isomerase family. In terms of assembly, homotetramer. It depends on Mg(2+) as a cofactor.

The protein localises to the cytoplasm. It carries out the reaction alpha-D-xylose = alpha-D-xylulofuranose. In Bifidobacterium longum (strain NCC 2705), this protein is Xylose isomerase.